A 301-amino-acid polypeptide reads, in one-letter code: Acetylglutamate kinase (301 aa).

Residues 68–69, R90, and N195 each bind substrate; that span reads GG.

This sequence belongs to the acetylglutamate kinase family. ArgB subfamily.

The protein resides in the cytoplasm. The enzyme catalyses N-acetyl-L-glutamate + ATP = N-acetyl-L-glutamyl 5-phosphate + ADP. It participates in amino-acid biosynthesis; L-arginine biosynthesis; N(2)-acetyl-L-ornithine from L-glutamate: step 2/4. In terms of biological role, catalyzes the ATP-dependent phosphorylation of N-acetyl-L-glutamate. In Pseudomonas fluorescens (strain ATCC BAA-477 / NRRL B-23932 / Pf-5), this protein is Acetylglutamate kinase.